The primary structure comprises 2146 residues: Phospholipid-transporting ATPase ABCA7 (2146 aa).

A helical transmembrane segment spans residues 22–42; that stretch reads PVQLLVELLWPLFLFFILVAV. At 43 to 549 the chain is on the extracellular side; that stretch reads RHSHPPLEHH…DVFLRVLSRS (507 aa). The cysteines at positions 75 and 225 are disulfide-linked. N312 is a glycosylation site (N-linked (GlcNAc...) asparagine). Transmembrane regions (helical) follow at residues 550 to 570, 593 to 613, 626 to 646, 655 to 675, 687 to 707, and 727 to 747; these read LPLF…KAVV, LGWF…LVLV, GVVF…SFLL, LAAA…VLCV, VAAS…LALL, and VFSL…YGLA. The ABC transporter 1 domain occupies 807–1038; sequence VSVRSLEKRF…LGSGYYLTLV (232 aa). An ATP-binding site is contributed by 841 to 848; that stretch reads GHNGAGKT. The helical transmembrane segment at 849–869 threads the bilayer; that stretch reads TTLSILSGLFPPSGGSAFILG. The span at 1048–1066 shows a compositional bias: basic and acidic residues; it reads EKADTDMEGSVDTRQEKKN. Disordered stretches follow at residues 1048 to 1072 and 1185 to 1209; these read EKAD…QGSR and TALE…DAVG. The chain crosses the membrane as a helical span at residues 1243 to 1263; that stretch reads IVLPALFVGLALVFSLIVPPF. Over 1264-1537 the chain is Extracellular; sequence GHYPALRLSP…ALMASSVDVL (274 aa). A disulfide bond links C1345 and C1359. A run of 6 helical transmembrane segments spans residues 1538–1558, 1584–1604, 1621–1641, 1649–1669, 1683–1703, and 1729–1749; these read VSIC…LVLI, FLWD…IFLA, LLLL…SFFF, VVLT…TFVL, ILKQ…LIDM, and VVGK…LFTL. Positions 1793 to 2025 constitute an ABC transporter 2 domain; sequence LVLRNLTKVY…FAAGHTLTLR (233 aa). 1827–1834 lines the ATP pocket; sequence GVNGAGKT. The interval 2104–2146 is disordered; it reads QGKDEDTEEQKEAGVGVDPAPGLQHPKRVSQFLDDPSTAETVL.

The protein belongs to the ABC transporter superfamily. ABCA family. Post-translationally, N-glycosylated. As to expression, expressed in leukocytes (at protein level). Widely expressed. Highly expressed in myelo-lymphatic tissues including peripheral leukocytes, thymus, spleen and bone marrow. Expressed in the hippocampus and the cerebellum. Isoform 2: Abundant in lymph node, spleen, thymus and trachea. Isoform 1: Strongly expressed in brain and bone marrow.

The protein resides in the cell membrane. It localises to the golgi apparatus membrane. The protein localises to the early endosome membrane. It is found in the cytoplasm. Its subcellular location is the cell projection. The protein resides in the ruffle membrane. It localises to the phagocytic cup. The protein localises to the endoplasmic reticulum. The enzyme catalyses ATP + H2O + phospholipidSide 1 = ADP + phosphate + phospholipidSide 2.. It carries out the reaction a 1,2-diacyl-sn-glycero-3-phosphocholine(out) + ATP + H2O = a 1,2-diacyl-sn-glycero-3-phosphocholine(in) + ADP + phosphate + H(+). It catalyses the reaction a 1,2-diacyl-sn-glycero-3-phospho-L-serine(out) + ATP + H2O = a 1,2-diacyl-sn-glycero-3-phospho-L-serine(in) + ADP + phosphate + H(+). ATPase activity is decreased by cholesterol and ceramide. ATPase activity is stimulated by phosphatidylserine, phosphatidylcholine and sphingomyelin, but phosphatidylserine is more effective. Catalyzes the translocation of specific phospholipids from the cytoplasmic to the extracellular/lumenal leaflet of membrane coupled to the hydrolysis of ATP. Transports preferentially phosphatidylserine over phosphatidylcholine. Plays a role in lipid homeostasis and macrophage-mediated phagocytosis. Binds APOA1 and may function in apolipoprotein-mediated phospholipid efflux from cells. May also mediate cholesterol efflux. May regulate cellular ceramide homeostasis during keratinocyte differentiation. Involved in lipid raft organization and CD1D localization on thymocytes and antigen-presenting cells, which plays an important role in natural killer T-cell development and activation. Plays a role in phagocytosis of apoptotic cells by macrophages. Macrophage phagocytosis is stimulated by APOA1 or APOA2, probably by stabilization of ABCA7. Also involved in phagocytic clearance of amyloid-beta by microglia cells and macrophages. Further limits amyloid-beta production by playing a role in the regulation of amyloid-beta A4 precursor protein (APP) endocytosis and/or processing. Amyloid-beta is the main component of amyloid plaques found in the brains of Alzheimer patients. This is Phospholipid-transporting ATPase ABCA7 from Homo sapiens (Human).